Reading from the N-terminus, the 215-residue chain is Calcium-binding protein 7 (215 aa).

Residues 1-188 (MPFHPVTAAL…QIRQTCVRKS (188 aa)) are Cytoplasmic-facing. EF-hand domains lie at 33 to 68 (DELEEIREAFKVFDRDGNGFISKQELGTAMRSLGYM) and 69 to 104 (PNEVELEVIIQRLDMDGDGQVDFEEFVTLLGPKLST). Ca(2+) is bound by residues aspartate 46, aspartate 48, asparagine 50, glutamate 57, aspartate 82, aspartate 84, aspartate 86, glutamine 88, and glutamate 93. A helical; Anchor for type IV membrane protein transmembrane segment spans residues 189–209 (LICAFAIAFIISVMLIAANQV). The Extracellular portion of the chain corresponds to 210–215 (LRSGMK).

In terms of assembly, interacts with PI4KB. This binding competes with FREQ/NCS1 binding in a calcium-dependent manner.

It localises to the golgi apparatus. The protein resides in the trans-Golgi network membrane. The protein localises to the cytoplasm. It is found in the perinuclear region. Its subcellular location is the cell membrane. Negatively regulates Golgi-to-plasma membrane trafficking by interacting with PI4KB and inhibiting its activity. The chain is Calcium-binding protein 7 (CABP7) from Homo sapiens (Human).